Reading from the N-terminus, the 206-residue chain is Adenylyl-sulfate kinase (206 aa).

Residue 31–38 participates in ATP binding; sequence GLSASGKS. The active-site Phosphoserine intermediate is the serine 105.

It belongs to the APS kinase family.

It catalyses the reaction adenosine 5'-phosphosulfate + ATP = 3'-phosphoadenylyl sulfate + ADP + H(+). Its pathway is sulfur metabolism; hydrogen sulfide biosynthesis; sulfite from sulfate: step 2/3. Its function is as follows. Catalyzes the synthesis of activated sulfate. This is Adenylyl-sulfate kinase (sD) from Emericella nidulans (strain FGSC A4 / ATCC 38163 / CBS 112.46 / NRRL 194 / M139) (Aspergillus nidulans).